The following is a 230-amino-acid chain: Large ribosomal subunit protein uL1 (230 aa).

Belongs to the universal ribosomal protein uL1 family. Part of the 50S ribosomal subunit.

Binds directly to 23S rRNA. The L1 stalk is quite mobile in the ribosome, and is involved in E site tRNA release. Functionally, protein L1 is also a translational repressor protein, it controls the translation of the L11 operon by binding to its mRNA. The chain is Large ribosomal subunit protein uL1 from Staphylococcus aureus (strain N315).